The primary structure comprises 1204 residues: Bromodomain and PHD finger-containing protein 3 (1204 aa).

Disordered stretches follow at residues 1–27 (MRKP…KCSP) and 76–127 (SNKE…TGSQ). Residues 89-99 (KSKKPSSKGKR) are compositionally biased toward basic residues. Residues 212-262 (DAFCCVCLDDECHNSNVILFCDICNLAVHQECYGVPYIPEGQWLCRCCLQS) form a PHD-type 1 zinc finger. The C2HC pre-PHD-type zinc finger occupies 266–299 (PVDCVLCPNKGGAFKQTSDGHWAHVVCAIWIPEV). A PHD-type 2 zinc finger spans residues 323-387 (LTCYICKQKG…RKTAYCEAHS (65 aa)). The disordered stretch occupies residues 393–464 (ARRKGDSPRS…KKEPEEAGRE (72 aa)). Serine 399 and serine 402 each carry phosphoserine. The span at 417-429 (GEEEQEEAEEEGQ) shows a compositional bias: acidic residues. Residues 442–454 (VSKKGKMSLKQKI) are compositionally biased toward basic residues. An N6-acetyllysine mark is found at lysine 445, lysine 447, and lysine 670. In terms of domain architecture, Bromo spans 588–692 (LELMPFTVLL…DLGGAILRHA (105 aa)). Residues serine 712 and serine 739 each carry the phosphoserine modification. The interval 778–879 (RQKLAQPPPP…FLKSRKVEDE (102 aa)) is disordered. Residues 816 to 826 (QQEEPEEEGDR) show a composition bias toward acidic residues. Phosphoserine is present on residues serine 899, serine 961, and serine 964. The tract at residues 903-1015 (IDRLSLTNPD…ESGSDSECSL (113 aa)) is disordered. The span at 979–990 (SCSDSEGERSPQ) shows a compositional bias: basic and acidic residues. Residues 1075-1158 (PLELVWAKCR…RDKVLPLGVE (84 aa)) form the PWWP domain.

In terms of assembly, component of some HBO1 complexes composed of KAT7/HBO1, MEAF6, ING4 or ING5, and BRPF3. Component of the MOZ/MORF complex composed at least of ING5, KAT6A, KAT6B, MEAF6 and one of BRPF1, BRD1/BRPF2 and BRPF3. Interacts with KAT7/HBO1; the interaction is direct. As to expression, highly expressed in the adult testis and brain.

The protein resides in the nucleus. In terms of biological role, scaffold subunit of various histone acetyltransferase (HAT) complexes, such as the MOZ/MORF and HBO1 complexes, which have a histone H3 acetyltransferase activity. Plays a role in DNA replication initiation by directing KAT7/HBO1 specificity towards histone H3 'Lys-14' acetylation (H3K14ac), thereby facilitating the activation of replication origins. Component of the MOZ/MORF complex which has a histone H3 acetyltransferase activity. This is Bromodomain and PHD finger-containing protein 3 from Mus musculus (Mouse).